The chain runs to 625 residues: Glucokinase regulatory protein (625 aa).

2 SIS domains span residues 90–286 and 320–499; these read VQEV…QGIA and VSTS…LLGK. Beta-D-fructose 1-phosphate is bound by residues 109 to 110, E153, and 179 to 181; these read TS and SVG. 109 to 110 is a beta-D-fructose 6-phosphate binding site; the sequence is TS. Residue 179 to 181 participates in beta-D-fructose 6-phosphate binding; that stretch reads SVG. The segment at 199–200 is important for interaction with GCK; it reads AV. E348 contributes to the beta-D-fructose 1-phosphate binding site. An essential for interaction with GCK region spans residues 463–465; that stretch reads LLF. Residue K514 participates in beta-D-fructose 1-phosphate binding. K514 contributes to the beta-D-fructose 6-phosphate binding site.

Belongs to the GCKR family. As to quaternary structure, interacts (fructose 6-phosphate bound form) with GCK. In terms of tissue distribution, found in liver and pancreas. Not detected in muscle, brain, heart, thymus, intestine, uterus, adipose tissue, kidney, adrenal, lung or spleen.

It is found in the cytoplasm. Its subcellular location is the nucleus. It localises to the mitochondrion. Its function is as follows. Regulates glucokinase (GCK) by forming an inactive complex with this enzyme. Acts by promoting GCK recruitment to the nucleus, possibly to provide a reserve of GCK that can be quickly released in the cytoplasm after a meal. The affinity of GCKR for GCK is modulated by fructose metabolites: GCKR with bound fructose 6-phosphate has increased affinity for GCK, while GCKR with bound fructose 1-phosphate has strongly decreased affinity for GCK and does not inhibit GCK activity. The sequence is that of Glucokinase regulatory protein from Homo sapiens (Human).